Consider the following 318-residue polypeptide: Protoheme IX farnesyltransferase (318 aa).

Transmembrane regions (helical) follow at residues 29–49, 51–71, 102–122, 123–143, 151–171, 179–199, 219–239, 241–261, and 280–300; these read IIPLLLITTAGSMWIAAQGQV, PVLLLVTMAGGTLAAASAQTI, LIFAIALAVLSFTLLTVFANL, LAASLALSGIIFYVLIYTHWL, IVIGGAAGAIPALVGWAAVTG, LIFAIVFLWTPPHFWALALMI, ATVKQIWYYTLITVAATLLLV, PLHASGIVYAAIAISLGAVFI, and LFLYSISYMMLLCLGMVVDSL.

This sequence belongs to the UbiA prenyltransferase family. Protoheme IX farnesyltransferase subfamily.

It is found in the cell inner membrane. The catalysed reaction is heme b + (2E,6E)-farnesyl diphosphate + H2O = Fe(II)-heme o + diphosphate. The protein operates within porphyrin-containing compound metabolism; heme O biosynthesis; heme O from protoheme: step 1/1. Functionally, converts heme B (protoheme IX) to heme O by substitution of the vinyl group on carbon 2 of heme B porphyrin ring with a hydroxyethyl farnesyl side group. The sequence is that of Protoheme IX farnesyltransferase from Nostoc sp. (strain PCC 7120 / SAG 25.82 / UTEX 2576).